Here is a 267-residue protein sequence, read N- to C-terminus: Nus factor SuhB (267 aa).

Residues E67, D84, and L86 each contribute to the Mg(2+) site. E67 contributes to the substrate binding site. Substrate is bound by residues 86–89 (LDGT), R183, and D212.

Belongs to the inositol monophosphatase superfamily. In terms of assembly, homodimer. The rRNA transcription and antitermination complex (rrnTAC) consists of RNA polymerase (RNAP), NusA, NusB, NusE (rpsJ), NusG, SubB, ribosomal protein S4, DNA and precursor rRNA; S4 is more flexible than other subunits. It depends on Mg(2+) as a cofactor.

It is found in the cytoplasm. The catalysed reaction is a myo-inositol phosphate + H2O = myo-inositol + phosphate. In terms of biological role, part of the processive rRNA transcription and antitermination complex (rrnTAC). The complex forms an RNA-chaperone ring around the RNA exit tunnel of RNA polymerase (RNAP). It supports rapid transcription and antitermination of rRNA operons, cotranscriptional rRNA folding, and annealing of distal rRNA regions to allow correct ribosome biogenesis. This subunit may play a central role in organizing the structure. The sequence is that of Nus factor SuhB from Vibrio cholerae serotype O1 (strain ATCC 39315 / El Tor Inaba N16961).